A 345-amino-acid polypeptide reads, in one-letter code: Phosphoribosylformylglycinamidine cyclo-ligase (345 aa).

This sequence belongs to the AIR synthase family.

The protein resides in the cytoplasm. The enzyme catalyses 2-formamido-N(1)-(5-O-phospho-beta-D-ribosyl)acetamidine + ATP = 5-amino-1-(5-phospho-beta-D-ribosyl)imidazole + ADP + phosphate + H(+). The protein operates within purine metabolism; IMP biosynthesis via de novo pathway; 5-amino-1-(5-phospho-D-ribosyl)imidazole from N(2)-formyl-N(1)-(5-phospho-D-ribosyl)glycinamide: step 2/2. The sequence is that of Phosphoribosylformylglycinamidine cyclo-ligase from Shewanella sp. (strain ANA-3).